Here is a 519-residue protein sequence, read N- to C-terminus: Cytosol aminopeptidase (519 aa).

At serine 42 the chain carries Phosphoserine. Position 45 is an N6-succinyllysine (lysine 45). Serine 54 is subject to Phosphoserine. Residues lysine 61 and lysine 103 each carry the N6-succinyllysine modification. A phosphoserine mark is found at serine 180 and serine 194. Residues leucine 202, methionine 203, and threonine 205 each coordinate Zn(2+). Lysine 221 carries the post-translational modification N6-acetyllysine; alternate. Lysine 221 is subject to N6-succinyllysine; alternate. Serine 238 carries the phosphoserine modification. Residues lysine 282 and aspartate 287 each contribute to the Zn(2+) site. Residues lysine 282, aspartate 287, serine 292, and lysine 294 each coordinate substrate. Aspartate 287 serves as a coordination point for Mg(2+). The active site involves lysine 294. Residues arginine 303, aspartate 305, aspartate 364, and glutamate 366 each coordinate Zn(2+). Substrate contacts are provided by aspartate 305 and aspartate 364. Mg(2+)-binding residues include aspartate 364 and glutamate 366. Arginine 368 is an active-site residue. Lysine 455 carries the post-translational modification N6-acetyllysine; alternate. Lysine 455 carries the post-translational modification N6-succinyllysine; alternate. Lysine 476 is subject to N6-succinyllysine. Lysine 489 bears the N6-acetyllysine; alternate mark. Lysine 489 is modified (N6-succinyllysine; alternate).

This sequence belongs to the peptidase M17 family. As to quaternary structure, homohexamer. Requires Zn(2+) as cofactor. The cofactor is Mn(2+).

It is found in the cytoplasm. The catalysed reaction is Release of an N-terminal amino acid, Xaa-|-Yaa-, in which Xaa is preferably Leu, but may be other amino acids including Pro although not Arg or Lys, and Yaa may be Pro. Amino acid amides and methyl esters are also readily hydrolyzed, but rates on arylamides are exceedingly low.. It carries out the reaction an S-substituted L-cysteinylglycine + H2O = an S-substituted L-cysteine + glycine. The enzyme catalyses L-cysteinylglycine + H2O = L-cysteine + glycine. It catalyses the reaction S-benzyl-L-cysteinylglycine + H2O = S-benzyl-L-cysteine + glycine. The catalysed reaction is Release of N-terminal proline from a peptide.. Its function is as follows. Cytosolic metallopeptidase that catalyzes the removal of unsubstituted N-terminal hydrophobic amino acids from various peptides. The presence of Zn(2+) ions is essential for the peptidase activity, and the association with other cofactors can modulate the substrate spectificity of the enzyme. For instance, in the presence of Mn(2+), it displays a specific Cys-Gly hydrolyzing activity of Cys-Gly-S-conjugates. Involved in the metabolism of glutathione and in the degradation of glutathione S-conjugates, which may play a role in the control of the cell redox status. This is Cytosol aminopeptidase from Sus scrofa (Pig).